The chain runs to 118 residues: Large ribosomal subunit protein uL18 (118 aa).

Residues methionine 1 to glycine 24 form a disordered region. Residues threonine 10–glycine 20 are compositionally biased toward basic residues.

This sequence belongs to the universal ribosomal protein uL18 family. Part of the 50S ribosomal subunit; part of the 5S rRNA/L5/L18/L25 subcomplex. Contacts the 5S and 23S rRNAs.

This is one of the proteins that bind and probably mediate the attachment of the 5S RNA into the large ribosomal subunit, where it forms part of the central protuberance. The protein is Large ribosomal subunit protein uL18 of Lactiplantibacillus plantarum (strain ATCC BAA-793 / NCIMB 8826 / WCFS1) (Lactobacillus plantarum).